The primary structure comprises 402 residues: Phosphoglycerate kinase (402 aa).

Substrate is bound by residues 24 to 26, R40, 63 to 66, R122, and R155; these read DFN and HFGR. ATP is bound by residues K206, G297, E328, and 358–361; that span reads GGDS.

It belongs to the phosphoglycerate kinase family. Monomer.

It localises to the cytoplasm. The enzyme catalyses (2R)-3-phosphoglycerate + ATP = (2R)-3-phospho-glyceroyl phosphate + ADP. It functions in the pathway carbohydrate degradation; glycolysis; pyruvate from D-glyceraldehyde 3-phosphate: step 2/5. This is Phosphoglycerate kinase from Prochlorococcus marinus (strain AS9601).